The primary structure comprises 503 residues: GMP synthase [glutamine-hydrolyzing] (503 aa).

One can recognise a Glutamine amidotransferase type-1 domain in the interval 3 to 189 (PVLVVDFGSQ…AFLSSFAAPN (187 aa)). Cys80 acts as the Nucleophile in catalysis. Active-site residues include His165 and Glu167. Residues 190–380 (WDPEQTICGT…LGIPKHIVHR (191 aa)) enclose the GMPS ATP-PPase domain. 217-223 (SGGVDSV) contributes to the ATP binding site.

As to quaternary structure, homodimer.

It catalyses the reaction XMP + L-glutamine + ATP + H2O = GMP + L-glutamate + AMP + diphosphate + 2 H(+). Its pathway is purine metabolism; GMP biosynthesis; GMP from XMP (L-Gln route): step 1/1. Catalyzes the synthesis of GMP from XMP. The chain is GMP synthase [glutamine-hydrolyzing] from Tropheryma whipplei (strain TW08/27) (Whipple's bacillus).